The following is a 935-amino-acid chain: MAPAEILNGREISAQIRARLKNQVTQLKEQVPGFTPGLAILLVGNRDDSNLYINVKLKAAEEIGIKATHIKLPRTTTESEVIKYITSLNEDSTVHGFLVQLPLDSENSINTEEVINAIAPEKDVDGLTSISAGKLARGDLNDCFIPCTPKGCLELIKETGVPIAGRHAVVVGRSKIVGAPMHDLLLWNNATVTTCHSKTANLDEEVNKGDILVVATGRPEMVKGEWIKPGAIVIDCGINYVPDDKKPNGRKVVGDVAYDEAKERASFITPVPGGVGPMTVAMLMQSTVESAKRFLEKFKPGKWMIQYNNLNLKTPDPSDIDISRSCKPKPIGKLAREIGLLSEEVELYGETKAKVLLSALERLKHRPDGKYVVVTGITPTPLGEGKSTTTVGLVQALGAHLYQNVFACVRQPSQGPTFGIKGGAAGGGYSQVIPMEEFNLHLTGDIHAFTAANNLVAAAIDARIFHELTQTDKALFNRLVPSVNGVRKFSDIQIRRLKRLGIEKTDPTTLTDEEINRFARLDIDPETITWQRVLDTNDRFLRKITIGQAPTEKGHTRTAQFDISVASEIMAALALTTSLEDMRERLGKMVVASSKKGEPVSAEDLGVSGALTVLMKDAIKPNLMQTLEGTPVFVHAGPFANIAHGNSSIIADRIALKLVGPEGFVVTEAGFGADIGMEKFFNIKCRYSGLCPHVVVLVATVRALKMHGGGPTVTAGLPLPKAYIEENLELVEKGFSNLKKQIENARMFGIPVVVAVNAFKTDTEAELDLISRLSREHGAFDAVKCTHWAEGGNGALALAQAVQRAAQAPSSFQLLYDLKLPVEDKIRIIAQKIYGADDIELLPEAQHKAEVYTKQGFGNLPVCMAKTHLSLSHNPEQKGVPTGFILPIRDIRASVGAGFLYPLVGTMSTMPGLPTRPCFYDIDLDPETQQVNGLF.

M1 bears the N-acetylmethionine mark. The segment at 2-291 is methylenetetrahydrofolate dehydrogenase and methenyltetrahydrofolate cyclohydrolase (D/C) domain; the sequence is APAEILNGRE…MLMQSTVESA (290 aa). Substrate-binding positions include 52 to 56 and 99 to 101; these read YINVK and VQL. Residue K56 is part of the active site. NADP(+) contacts are provided by residues 172–174 and S197; that span reads GRS. 272 to 276 lines the substrate pocket; the sequence is PGGVG. Residues 310-935 form a formyltetrahydrofolate synthetase domain region; that stretch reads LNLKTPDPSD…PETQQVNGLF (626 aa). S318 is subject to Phosphoserine. 380 to 387 contacts ATP; sequence TPLGEGKS. S413 and S490 each carry phosphoserine.

This sequence in the N-terminal section; belongs to the tetrahydrofolate dehydrogenase/cyclohydrolase family. In the C-terminal section; belongs to the formate--tetrahydrofolate ligase family. As to quaternary structure, homodimer.

It is found in the cytoplasm. The enzyme catalyses (6R)-5,10-methylene-5,6,7,8-tetrahydrofolate + NADP(+) = (6R)-5,10-methenyltetrahydrofolate + NADPH. It catalyses the reaction (6R)-5,10-methenyltetrahydrofolate + H2O = (6R)-10-formyltetrahydrofolate + H(+). The catalysed reaction is (6S)-5,6,7,8-tetrahydrofolate + formate + ATP = (6R)-10-formyltetrahydrofolate + ADP + phosphate. The protein operates within one-carbon metabolism; tetrahydrofolate interconversion. Trifunctional enzyme that catalyzes the interconversion of three forms of one-carbon-substituted tetrahydrofolate: (6R)-5,10-methylene-5,6,7,8-tetrahydrofolate, 5,10-methenyltetrahydrofolate and (6S)-10-formyltetrahydrofolate. These derivatives of tetrahydrofolate are differentially required in nucleotide and amino acid biosynthesis, (6S)-10-formyltetrahydrofolate being required for purine biosynthesis while (6R)-5,10-methylene-5,6,7,8-tetrahydrofolate is used for serine and methionine biosynthesis for instance. This is C-1-tetrahydrofolate synthase, cytoplasmic (MTHFD1) from Pongo abelii (Sumatran orangutan).